The following is a 322-amino-acid chain: MSQRQFKVIIIGGSVTGLTLAHSLHKIGIDYVVLEKRDTVTPQEGASIGILPNGARILDQLGLYEAIEDEAPPLGATRIHFPDGFAFTSLYPKKILENFGYPIAFLERRQLLRILYDALPDKTRIHVNKTMSTIEHFTKDEITGARVLTKEGDVYEGDLIVGADGIHSQTRGEIWRRINSSKSEFEPAECIDKCILIEYSCCFGISKCVTGLIAGEQVMHMRNGRTLVVIPSKDEVVFWFLVEKLDRKYTYSEAPRFTIDDATALCSQVFTLPIGNGIKFEDVWNKREVVNMLSLEESCLSTWSTGRLVCIGDSIHKVSIPS.

FAD is bound by residues E35, G49, R108, and D313.

The protein belongs to the paxM FAD-dependent monooxygenase family. The cofactor is FAD.

The protein operates within secondary metabolite biosynthesis; terpenoid biosynthesis. FAD-dependent monooxygenase; part of the gene cluster that mediates the biosynthesis of the immunosuppressants subglutinols, meroterpenoids consisting of an alpha-pyrone (4-hydroxy-5,6-dimethyl-2-pyrone) moiety attached to a decalin core fused to a five-membered cyclic ether carrying a prenylside chain. The first step of the pathway is the synthesis of the alpha-pyrone moiety by the polyketide synthase subA via condensation of one acetyl-CoA starter unit with 3 malonyl-CoA units and 2 methylations. The alpha-pyrone is then combined with geranylgeranyl pyrophosphate (GGPP) formed by the GGPP synthase subD through the action of the prenyltransferase subC to yield a linear alpha-pyrone diterpenoid. Subsequent steps in the subglutinol biosynthetic pathway involve the decalin core formation, which is thought to be initiated by the epoxidation of the C10-C11 olefin by the FAD-dependent oxidoreductase subE. The following cyclization cascade would be catalyzed by the terpene cyclase subB. Lastly, the FAD-dependent dehydrogenase subF probably catalyzes the five-membered cyclic ether formation to complete the formation of subglutinol A. Subsequent redox reactions appear to give rise to subglutinol C and D, however, it remains unclear which enzymes are responsible for these transformations. SubD may have secondary function in the conversion of the identified subglutinols to subglutinol analog 45, which seems to be the major product of the cluster. The sequence is that of FAD-dependent monooxygenase subE from Metarhizium robertsii (strain ARSEF 23 / ATCC MYA-3075) (Metarhizium anisopliae (strain ARSEF 23)).